The sequence spans 230 residues: 2,3-bisphosphoglycerate-dependent phosphoglycerate mutase (230 aa).

Residues 10–17 (RHGQSKWN), 23–24 (TG), Arg-62, 89–92 (ERHY), Lys-100, 116–117 (RR), and 185–186 (GN) contribute to the substrate site. Residue His-11 is the Tele-phosphohistidine intermediate of the active site. Glu-89 functions as the Proton donor/acceptor in the catalytic mechanism.

The protein belongs to the phosphoglycerate mutase family. BPG-dependent PGAM subfamily. In terms of assembly, homodimer.

The enzyme catalyses (2R)-2-phosphoglycerate = (2R)-3-phosphoglycerate. It participates in carbohydrate degradation; glycolysis; pyruvate from D-glyceraldehyde 3-phosphate: step 3/5. Functionally, catalyzes the interconversion of 2-phosphoglycerate and 3-phosphoglycerate. The sequence is that of 2,3-bisphosphoglycerate-dependent phosphoglycerate mutase from Buchnera aphidicola subsp. Schizaphis graminum (strain Sg).